The primary structure comprises 276 residues: Undecaprenyl-diphosphatase (276 aa).

The next 5 membrane-spanning stretches (helical) occupy residues 84-104 (YRLG…GLLF), 115-135 (LWVV…AEYL), 188-208 (FGFL…LPDA), 222-242 (QLLV…SWFL), and 250-270 (MYWF…LLAT).

The protein belongs to the UppP family.

It is found in the cell membrane. It catalyses the reaction di-trans,octa-cis-undecaprenyl diphosphate + H2O = di-trans,octa-cis-undecaprenyl phosphate + phosphate + H(+). Catalyzes the dephosphorylation of undecaprenyl diphosphate (UPP). Confers resistance to bacitracin. The protein is Undecaprenyl-diphosphatase of Mycobacterium ulcerans (strain Agy99).